The primary structure comprises 513 residues: Ankyrin repeat domain-containing protein 13C-B (513 aa).

Basic and acidic residues predominate over residues 1-19 (MTGEKIRSLHRDQKPSKDE). 2 disordered regions span residues 1–34 (MTGEKIRSLHRDQKPSKDEDLLEPDEEATADGTF) and 55–77 (PSNPALLQNHHHHHQQQISPMTP). The span at 20–29 (DLLEPDEEAT) shows a compositional bias: acidic residues. ANK repeat units lie at residues 83 to 114 (DVYFPVHECVIKGDIRKLSSLIRSHNIGQKDN), 115 to 144 (HGNTPLHLAVMLGNKECAHLLLAHNAPVKV), and 148 to 177 (QGWSPLAEAISYGDRQMITALLRKLKQQSR).

It localises to the endoplasmic reticulum membrane. In terms of biological role, acts as a molecular chaperone for G protein-coupled receptors, regulating their biogenesis and exit from the ER. This Xenopus laevis (African clawed frog) protein is Ankyrin repeat domain-containing protein 13C-B (ankrd13c-b).